The primary structure comprises 284 residues: Formamidopyrimidine-DNA glycosylase (284 aa).

Proline 2 acts as the Schiff-base intermediate with DNA in catalysis. The Proton donor role is filled by glutamate 3. Lysine 61 (proton donor; for beta-elimination activity) is an active-site residue. Positions 95, 114, and 159 each coordinate DNA. Residues 244–278 (WVYGRKGQPCRVCNTPIERIRLAGRSTHFCPTCQR) form an FPG-type zinc finger. The active-site Proton donor; for delta-elimination activity is the arginine 268.

It belongs to the FPG family. As to quaternary structure, monomer. Zn(2+) serves as cofactor.

The catalysed reaction is Hydrolysis of DNA containing ring-opened 7-methylguanine residues, releasing 2,6-diamino-4-hydroxy-5-(N-methyl)formamidopyrimidine.. It carries out the reaction 2'-deoxyribonucleotide-(2'-deoxyribose 5'-phosphate)-2'-deoxyribonucleotide-DNA = a 3'-end 2'-deoxyribonucleotide-(2,3-dehydro-2,3-deoxyribose 5'-phosphate)-DNA + a 5'-end 5'-phospho-2'-deoxyribonucleoside-DNA + H(+). Involved in base excision repair of DNA damaged by oxidation or by mutagenic agents. Acts as a DNA glycosylase that recognizes and removes damaged bases. Has a preference for oxidized purines, such as 7,8-dihydro-8-oxoguanine (8-oxoG). Has AP (apurinic/apyrimidinic) lyase activity and introduces nicks in the DNA strand. Cleaves the DNA backbone by beta-delta elimination to generate a single-strand break at the site of the removed base with both 3'- and 5'-phosphates. This chain is Formamidopyrimidine-DNA glycosylase, found in Gloeobacter violaceus (strain ATCC 29082 / PCC 7421).